Here is a 437-residue protein sequence, read N- to C-terminus: MLARNLRCLHPNTFASLKTNVSYHGVKCLASQSKRGFKVWADVPMGPPDPIFGITEAYKKDGDVKKMNLGAGTYRDDAGKPYVLPSVRQAETELLSQKLDKEYAPITGIPSFRVQATKLAYGDVYESIKDRLVSAQSISGTGALCIAANFLASFYPSKTIYVSDPTWGNHKNVFSRAGLTVKSYKYYDPATRGLDIKGMLSDLTSAPDGSIILLHACAHNPTGVDPTKAQWDDILKTMQKKNHFALLDMAYQGFASGDFARDAYATRLFASSNVPMLLCQSFAKNMGLYGERAGCFSILANDAEEAARIESQTKILIRALYSNPPVNGARIANHILSNPALREQWAGEVVGMSERLKSMRKALRNILEKDLKNKHSWKHITDQIGMFCYTGLNPQQVDVLAKQYHIYLTKNGRISISGLNTSNVRYFAEAINAVTSN.

L-aspartate is bound by residues G72, W167, and N220. Position 284 is an N6-(pyridoxal phosphate)lysine (K284). Residue R413 coordinates L-aspartate.

Belongs to the class-I pyridoxal-phosphate-dependent aminotransferase family. As to quaternary structure, homodimer. Requires pyridoxal 5'-phosphate as cofactor.

Its subcellular location is the mitochondrion matrix. It catalyses the reaction L-aspartate + 2-oxoglutarate = oxaloacetate + L-glutamate. Plays a key role in amino acid metabolism. Important for metabolite exchange between mitochondria and cytosol. This Schizosaccharomyces pombe (strain 972 / ATCC 24843) (Fission yeast) protein is Aspartate aminotransferase, mitochondrial.